The primary structure comprises 100 residues: Urease subunit gamma (100 aa).

It belongs to the urease gamma subunit family. Heterotrimer of UreA (gamma), UreB (beta) and UreC (alpha) subunits. Three heterotrimers associate to form the active enzyme.

Its subcellular location is the cytoplasm. The catalysed reaction is urea + 2 H2O + H(+) = hydrogencarbonate + 2 NH4(+). It participates in nitrogen metabolism; urea degradation; CO(2) and NH(3) from urea (urease route): step 1/1. This Mycobacteroides abscessus (strain ATCC 19977 / DSM 44196 / CCUG 20993 / CIP 104536 / JCM 13569 / NCTC 13031 / TMC 1543 / L948) (Mycobacterium abscessus) protein is Urease subunit gamma.